The chain runs to 796 residues: AUGMIN subunit 5 (796 aa).

A disordered region spans residues 79 to 120; the sequence is HGGSSNASIGSSVNPGKEESKSKGRRKDKTVTGESSSYAEDR. Over residues 80–92 the composition is skewed to polar residues; it reads GGSSNASIGSSVN. Coiled-coil stretches lie at residues 115 to 191 and 462 to 501; these read SYAE…EATR and GKER…LKKK.

The protein belongs to the HAUS5 family. Part of the augmin complex composed of 8 subunits. The complex acts on microtubules and interacts with gamma-tubulin in spindles and the phragmoplast.

The protein localises to the cytoplasm. Its subcellular location is the cytoskeleton. The protein resides in the spindle. It localises to the phragmoplast. In terms of biological role, involved in microtubules reorganization during spindle and phragmoplast development. This is AUGMIN subunit 5 from Arabidopsis thaliana (Mouse-ear cress).